Here is a 479-residue protein sequence, read N- to C-terminus: UDP-N-acetylmuramoyl-L-alanyl-D-glutamate--2,6-diaminopimelate ligase (479 aa).

A UDP-N-acetyl-alpha-D-muramoyl-L-alanyl-D-glutamate-binding site is contributed by serine 21. 98-104 (GTNGKSS) contacts ATP. UDP-N-acetyl-alpha-D-muramoyl-L-alanyl-D-glutamate is bound by residues 144–145 (TT), serine 171, glutamine 177, and arginine 179. An N6-carboxylysine modification is found at lysine 211. Meso-2,6-diaminopimelate contacts are provided by residues arginine 372, 396–399 (DNPR), glycine 446, and glutamate 450. Residues 396–399 (DNPR) carry the Meso-diaminopimelate recognition motif motif.

This sequence belongs to the MurCDEF family. MurE subfamily. Mg(2+) serves as cofactor. Post-translationally, carboxylation is probably crucial for Mg(2+) binding and, consequently, for the gamma-phosphate positioning of ATP.

The protein resides in the cytoplasm. It carries out the reaction UDP-N-acetyl-alpha-D-muramoyl-L-alanyl-D-glutamate + meso-2,6-diaminopimelate + ATP = UDP-N-acetyl-alpha-D-muramoyl-L-alanyl-gamma-D-glutamyl-meso-2,6-diaminopimelate + ADP + phosphate + H(+). Its pathway is cell wall biogenesis; peptidoglycan biosynthesis. Functionally, catalyzes the addition of meso-diaminopimelic acid to the nucleotide precursor UDP-N-acetylmuramoyl-L-alanyl-D-glutamate (UMAG) in the biosynthesis of bacterial cell-wall peptidoglycan. This Rickettsia montanensis protein is UDP-N-acetylmuramoyl-L-alanyl-D-glutamate--2,6-diaminopimelate ligase.